A 235-amino-acid chain; its full sequence is Phosphoribosylaminoimidazole-succinocarboxamide synthase (235 aa).

The protein belongs to the SAICAR synthetase family.

The catalysed reaction is 5-amino-1-(5-phospho-D-ribosyl)imidazole-4-carboxylate + L-aspartate + ATP = (2S)-2-[5-amino-1-(5-phospho-beta-D-ribosyl)imidazole-4-carboxamido]succinate + ADP + phosphate + 2 H(+). It functions in the pathway purine metabolism; IMP biosynthesis via de novo pathway; 5-amino-1-(5-phospho-D-ribosyl)imidazole-4-carboxamide from 5-amino-1-(5-phospho-D-ribosyl)imidazole-4-carboxylate: step 1/2. In Streptococcus thermophilus (strain CNRZ 1066), this protein is Phosphoribosylaminoimidazole-succinocarboxamide synthase.